We begin with the raw amino-acid sequence, 1324 residues long: Mediator of RNA polymerase II transcription subunit 13 (1324 aa).

6 disordered regions span residues 296–346 (ESGV…PPEA), 386–455 (FFDD…ATTA), 535–590 (GRFF…EPEI), 607–631 (HDDKPAKKIDSSNDTTNSDGNSNNS), 694–816 (KGGQ…VPSA), and 1151–1198 (TGSD…PDIY). The span at 298–331 (GVNTNESTAAQPQPAQNGTNSMAPAAGTTNATTQ) shows a compositional bias: polar residues. Over residues 398-407 (DGDNDNGNDN) the composition is skewed to acidic residues. A compositionally biased stretch (basic and acidic residues) spans 408-442 (DNDKADAMDVDVKEEAKKEEMIKKETKEEVPVKEE). Over residues 546–566 (DNEGSSDNTGDSSDSGDGSES) the composition is skewed to low complexity. 2 stretches are compositionally biased toward basic and acidic residues: residues 567–578 (VPRDVKRQKVDE) and 607–617 (HDDKPAKKIDS). 2 stretches are compositionally biased toward low complexity: residues 618–631 (SNDTTNSDGNSNNS) and 724–743 (SNASGVPSGSSGAQASQMGA). The span at 750–784 (LSPSRGATPQPEGSSPETRPSNWTPGITSQVNSAA) shows a compositional bias: polar residues. Composition is skewed to low complexity over residues 785–816 (SSPVPLQQHQQQQQSFSPMSPQTPAQAPVPSA) and 1172–1184 (TGAAGAASTGSAP).

The protein belongs to the Mediator complex subunit 13 family. Component of the SRB8-11 complex, which itself associates with the Mediator complex.

It is found in the nucleus. Component of the SRB8-11 complex. The SRB8-11 complex is a regulatory module of the Mediator complex which is itself involved in regulation of basal and activated RNA polymerase II-dependent transcription. The SRB8-11 complex may be involved in the transcriptional repression of a subset of genes regulated by Mediator. It may inhibit the association of the Mediator complex with RNA polymerase II to form the holoenzyme complex. The polypeptide is Mediator of RNA polymerase II transcription subunit 13 (SSN2) (Yarrowia lipolytica (strain CLIB 122 / E 150) (Yeast)).